We begin with the raw amino-acid sequence, 248 residues long: UDP-2,3-diacylglucosamine hydrolase (248 aa).

Residues Asp-8, His-10, Asp-41, Asn-79, and His-114 each coordinate Mn(2+). Asn-79–Arg-80 lines the substrate pocket. Residues Asp-122, Ser-160, Asp-171, and His-202 each coordinate substrate. His-202 and His-204 together coordinate Mn(2+).

The protein belongs to the LpxH family. Requires Mn(2+) as cofactor.

It is found in the cell inner membrane. It carries out the reaction UDP-2-N,3-O-bis[(3R)-3-hydroxytetradecanoyl]-alpha-D-glucosamine + H2O = 2-N,3-O-bis[(3R)-3-hydroxytetradecanoyl]-alpha-D-glucosaminyl 1-phosphate + UMP + 2 H(+). It functions in the pathway glycolipid biosynthesis; lipid IV(A) biosynthesis; lipid IV(A) from (3R)-3-hydroxytetradecanoyl-[acyl-carrier-protein] and UDP-N-acetyl-alpha-D-glucosamine: step 4/6. Functionally, hydrolyzes the pyrophosphate bond of UDP-2,3-diacylglucosamine to yield 2,3-diacylglucosamine 1-phosphate (lipid X) and UMP by catalyzing the attack of water at the alpha-P atom. Involved in the biosynthesis of lipid A, a phosphorylated glycolipid that anchors the lipopolysaccharide to the outer membrane of the cell. The chain is UDP-2,3-diacylglucosamine hydrolase from Stenotrophomonas maltophilia (strain R551-3).